Consider the following 485-residue polypeptide: Kynureninase 1 (485 aa).

Pyridoxal 5'-phosphate is bound by residues Leu-155, Thr-156, Phe-183–Asp-186, Asp-267, His-270, and Tyr-292. N6-(pyridoxal phosphate)lysine is present on Lys-293. Trp-330 and Asn-358 together coordinate pyridoxal 5'-phosphate.

This sequence belongs to the kynureninase family. Homodimer. The cofactor is pyridoxal 5'-phosphate.

The protein resides in the cytoplasm. It carries out the reaction L-kynurenine + H2O = anthranilate + L-alanine + H(+). The enzyme catalyses 3-hydroxy-L-kynurenine + H2O = 3-hydroxyanthranilate + L-alanine + H(+). Its pathway is amino-acid degradation; L-kynurenine degradation; L-alanine and anthranilate from L-kynurenine: step 1/1. It functions in the pathway cofactor biosynthesis; NAD(+) biosynthesis; quinolinate from L-kynurenine: step 2/3. Its function is as follows. Catalyzes the cleavage of L-kynurenine (L-Kyn) and L-3-hydroxykynurenine (L-3OHKyn) into anthranilic acid (AA) and 3-hydroxyanthranilic acid (3-OHAA), respectively. This is Kynureninase 1 (kyn-1) from Neurospora crassa (strain ATCC 24698 / 74-OR23-1A / CBS 708.71 / DSM 1257 / FGSC 987).